The following is a 209-amino-acid chain: Thymidine kinase (209 aa).

ATP is bound by residues 9-16 (SAMNAGKT) and 88-91 (DEAQ). E89 acts as the Proton acceptor in catalysis.

Belongs to the thymidine kinase family. In terms of assembly, homotetramer.

Its subcellular location is the cytoplasm. The enzyme catalyses thymidine + ATP = dTMP + ADP + H(+). The sequence is that of Thymidine kinase from Xanthomonas campestris pv. campestris (strain 8004).